The sequence spans 339 residues: Serpentine receptor class alpha-20 (339 aa).

The next 6 membrane-spanning stretches (helical) occupy residues 30-50 (VSFV…VLAI), 113-132 (LYFY…SLTF), 151-171 (VSIS…YFGL), 199-219 (FRTT…YLNV), 249-269 (CILI…VNYI), and 284-304 (IAPF…VIYF).

This sequence belongs to the nematode receptor-like protein sra family.

It is found in the membrane. The protein is Serpentine receptor class alpha-20 (sra-20) of Caenorhabditis elegans.